A 293-amino-acid polypeptide reads, in one-letter code: Protein bcp-1 (293 aa).

Residues 1-12 (MGKKRSREEAQK) are compositionally biased toward basic and acidic residues. The segment at 1-35 (MGKKRSREEAQKEVVQNDPTVDKMDEDSDSSDSDE) is disordered. The segment covering 24–35 (MDEDSDSSDSDE) has biased composition (acidic residues).

This sequence belongs to the BCP1 family.

Its subcellular location is the cytoplasm. It is found in the nucleus. Involved in nuclear export, actin cytoskeleton organization and vesicular transport. The chain is Protein bcp-1 (bcp-1) from Neurospora crassa (strain ATCC 24698 / 74-OR23-1A / CBS 708.71 / DSM 1257 / FGSC 987).